The primary structure comprises 352 residues: Photosystem II D2 protein 2 (352 aa).

The chain crosses the membrane as a helical span at residues 40–60 (CAYLALGGWLTGTSFVTSWYT). Residue His117 coordinates chlorophyll a. The helical transmembrane segment at 124–140 (GFMLRQFEIARLVGVRP) threads the bilayer. Positions 129 and 142 each coordinate pheophytin a. A helical transmembrane segment spans residues 152 to 165 (VFVSVFLMYPLGQS). Chlorophyll a is bound at residue His197. Residues 207–227 (GALLCAIHGATVENTLFEDSE) form a helical membrane-spanning segment. His214 and Phe261 together coordinate a plastoquinone. Position 214 (His214) interacts with Fe cation. His268 provides a ligand contact to Fe cation. Residues 278-294 (GLWMSSIGIVGLALNLR) traverse the membrane as a helical segment.

The protein belongs to the reaction center PufL/M/PsbA/D family. In terms of assembly, PSII is composed of 1 copy each of membrane proteins PsbA, PsbB, PsbC, PsbD, PsbE, PsbF, PsbH, PsbI, PsbJ, PsbK, PsbL, PsbM, PsbT, PsbX, PsbY, PsbZ, Psb30/Ycf12, peripheral proteins PsbO, CyanoQ (PsbQ), PsbU, PsbV and a large number of cofactors. It forms dimeric complexes. It depends on The D1/D2 heterodimer binds P680, chlorophylls that are the primary electron donor of PSII, and subsequent electron acceptors. It shares a non-heme iron and each subunit binds pheophytin, quinone, additional chlorophylls, carotenoids and lipids. There is also a Cl(-1) ion associated with D1 and D2, which is required for oxygen evolution. The PSII complex binds additional chlorophylls, carotenoids and specific lipids. as a cofactor.

It localises to the cellular thylakoid membrane. The catalysed reaction is 2 a plastoquinone + 4 hnu + 2 H2O = 2 a plastoquinol + O2. Photosystem II (PSII) is a light-driven water:plastoquinone oxidoreductase that uses light energy to abstract electrons from H(2)O, generating O(2) and a proton gradient subsequently used for ATP formation. It consists of a core antenna complex that captures photons, and an electron transfer chain that converts photonic excitation into a charge separation. The D1/D2 (PsbA/PsbD) reaction center heterodimer binds P680, the primary electron donor of PSII as well as several subsequent electron acceptors. D2 is needed for assembly of a stable PSII complex. The chain is Photosystem II D2 protein 2 from Synechococcus sp. (strain ATCC 27144 / PCC 6301 / SAUG 1402/1) (Anacystis nidulans).